The primary structure comprises 205 residues: Probable GTP-binding protein EngB (205 aa).

Positions 29–203 (QGAEIAFIGR…KAVLSQWFSS (175 aa)) constitute an EngB-type G domain. Residues 37 to 44 (GRSNAGKS), 64 to 68 (GRTQM), 82 to 85 (DLPG), 149 to 152 (TKSD), and 182 to 184 (FSS) contribute to the GTP site. Mg(2+)-binding residues include S44 and T66.

The protein belongs to the TRAFAC class TrmE-Era-EngA-EngB-Septin-like GTPase superfamily. EngB GTPase family. It depends on Mg(2+) as a cofactor.

Its function is as follows. Necessary for normal cell division and for the maintenance of normal septation. This Coxiella burnetii (strain CbuK_Q154) (Coxiella burnetii (strain Q154)) protein is Probable GTP-binding protein EngB.